A 475-amino-acid polypeptide reads, in one-letter code: Ribulose bisphosphate carboxylase large chain (475 aa).

The propeptide occupies Met1–Ser2. Pro3 is subject to N-acetylproline. The residue at position 14 (Lys14) is an N6,N6,N6-trimethyllysine. 2 residues coordinate substrate: Asn123 and Thr173. The active-site Proton acceptor is Lys175. Residue Lys177 participates in substrate binding. Lys201, Asp203, and Glu204 together coordinate Mg(2+). Position 201 is an N6-carboxylysine (Lys201). The active-site Proton acceptor is His294. Substrate is bound by residues Arg295, His327, and Ser379.

This sequence belongs to the RuBisCO large chain family. Type I subfamily. Heterohexadecamer of 8 large chains and 8 small chains; disulfide-linked. The disulfide link is formed within the large subunit homodimers. The cofactor is Mg(2+). Post-translationally, the disulfide bond which can form in the large chain dimeric partners within the hexadecamer appears to be associated with oxidative stress and protein turnover.

It is found in the plastid. The protein localises to the chloroplast. The enzyme catalyses 2 (2R)-3-phosphoglycerate + 2 H(+) = D-ribulose 1,5-bisphosphate + CO2 + H2O. The catalysed reaction is D-ribulose 1,5-bisphosphate + O2 = 2-phosphoglycolate + (2R)-3-phosphoglycerate + 2 H(+). In terms of biological role, ruBisCO catalyzes two reactions: the carboxylation of D-ribulose 1,5-bisphosphate, the primary event in carbon dioxide fixation, as well as the oxidative fragmentation of the pentose substrate in the photorespiration process. Both reactions occur simultaneously and in competition at the same active site. This chain is Ribulose bisphosphate carboxylase large chain, found in Pseudolarix amabilis (Golden larch).